We begin with the raw amino-acid sequence, 257 residues long: Glutamate racemase (257 aa).

Substrate-binding positions include D12–S13 and Y44–G45. The active-site Proton donor/acceptor is the C75. N76–T77 is a binding site for substrate. C185 serves as the catalytic Proton donor/acceptor. T186–H187 lines the substrate pocket.

This sequence belongs to the aspartate/glutamate racemases family.

The enzyme catalyses L-glutamate = D-glutamate. Its pathway is cell wall biogenesis; peptidoglycan biosynthesis. Provides the (R)-glutamate required for cell wall biosynthesis. This is Glutamate racemase from Clostridium botulinum (strain Kyoto / Type A2).